We begin with the raw amino-acid sequence, 303 residues long: Mitochondrial carrier homolog 2 (303 aa).

The residue at position 2 (A2) is an N-acetylalanine. Over 2–15 (ADAASQVLLGSGLT) the chain is Mitochondrial intermembrane. Solcar repeat units lie at residues 2 to 98 (ADAA…YQEC) and 118 to 206 (DRVI…VNTY). The chain crosses the membrane as a helical span at residues 16–36 (ILSQPLMYVKVLIQVGYEPLA). Residues 37–77 (PTVGRNIFGRQVCQLPGLFCYAQHIASIDGKRGLFTGLTPR) are Cytoplasmic-facing. The helical transmembrane segment at 78 to 92 (LCSGVLGTVVHGKVL) threads the bilayer. Topologically, residues 93–135 (QHYQECDKAEESGSGNVQKEVSSSFDRVIKETTREMMARSAAT) are mitochondrial intermembrane. A helical transmembrane segment spans residues 136–156 (LITHPFHVITLRSMVQFIGRE). Residues 157 to 180 (SKYCGLCDSIATIYREEGILGFFA) lie on the Cytoplasmic side of the membrane. A helical membrane pass occupies residues 181-199 (GLIPRLLGDIISLWLCNSL). Topologically, residues 200–231 (AYLVNTYALDSGVSTMNEMKSYSQAVTGFFAS) are mitochondrial intermembrane. The chain crosses the membrane as a helical span at residues 232-252 (MLTYPFVLVSNLMAVNNCGLA). At 253–280 (GGCPPYAPIYSSWIDCWCMLQKEGNMSR) the chain is on the cytoplasmic side. The chain crosses the membrane as a helical span at residues 281–303 (GNSLFFRKVPFGKTYCCDLRMLI).

The protein belongs to the mitochondrial carrier (TC 2.A.29) family. In terms of assembly, interacts with p15BID.

It localises to the mitochondrion outer membrane. In terms of biological role, protein insertase that mediates insertion of transmembrane proteins into the mitochondrial outer membrane. Catalyzes insertion of proteins with alpha-helical transmembrane regions, such as signal-anchored, tail-anchored and multi-pass membrane proteins. Does not mediate insertion of beta-barrel transmembrane proteins. Also acts as a receptor for the truncated form of pro-apoptotic BH3-interacting domain death agonist (p15 BID) and has therefore a critical function in apoptosis. Regulates the quiescence/cycling of hematopoietic stem cells (HSCs). Acts as a regulator of mitochondrial fusion, essential for the naive-to-primed interconversion of embryonic stem cells (ESCs). Acts as a regulator of lipid homeostasis and has a regulatory role in adipocyte differentiation and biology. The protein is Mitochondrial carrier homolog 2 (MTCH2) of Bos taurus (Bovine).